A 915-amino-acid chain; its full sequence is Coronin-7 (915 aa).

4 WD repeats span residues 75–115 (CHSD…QALP), 124–163 (PEDA…PLTE), 166–205 (THGD…EAAQ), and 209–253 (AHEN…AALT). The tract at residues 396–456 (TSCLAPPAEL…TSPSQRSLQS (61 aa)) is disordered. 2 stretches are compositionally biased toward low complexity: residues 399–413 (LAPP…AQPA) and 420–450 (SSTP…TSPS). Phosphoserine occurs at positions 453 and 456. Residue Lys-463 forms a Glycyl lysine isopeptide (Lys-Gly) (interchain with G-Cter in ubiquitin) linkage. WD repeat units follow at residues 533 to 573 (QNGV…LQEV), 583 to 623 (GHTE…EQLR), 626 to 665 (GHRD…EPLQ), and 719 to 759 (DVAP…PFFL). Residues 850-915 (PPGMTPVSQA…FEGVDEDEWD (66 aa)) are disordered. Residues 859-869 (APREAPARRAP) show a composition bias toward low complexity. A compositionally biased stretch (basic and acidic residues) spans 874 to 886 (LEEKSDQQKKEEL). A Phosphoserine modification is found at Ser-905.

Belongs to the WD repeat coronin family. Interacts with clathrin adapter AP1 complex. This interaction takes place at Golgi membranes and not AP1-positive endosomal membranes. Interacts (when ubiquitinated at Lys-463) with EPS15. Post-translationally, the membrane-associated form is phosphorylated on tyrosine residues. Ubiquitinated via 'Lys-33'-linked ubiquitin chains by the BCR(KLHL20) E3 ubiquitin ligase complex: 'Lys-33'-linked ubiquitination promotes interaction with EPS15 and facilitates actin polymerization at the trans-Golgi network, thereby facilitating post-Golgi trafficking. Deubiquitinated by ZRANB1/TRABID.

It is found in the golgi apparatus membrane. Its subcellular location is the golgi apparatus. It localises to the trans-Golgi network. The protein resides in the cytoplasmic vesicle. The protein localises to the cytoplasm. It is found in the cytosol. In terms of biological role, F-actin regulator involved in anterograde Golgi to endosome transport: upon ubiquitination via 'Lys-33'-linked ubiquitin chains by the BCR(KLHL20) E3 ubiquitin ligase complex, interacts with EPS15 and localizes to the trans-Golgi network, where it promotes actin polymerization, thereby facilitating post-Golgi trafficking. May play a role in the maintenance of the Golgi apparatus morphology. The protein is Coronin-7 (CORO7) of Bos taurus (Bovine).